Reading from the N-terminus, the 337-residue chain is U11/U12 small nuclear ribonucleoprotein 48 kDa protein (337 aa).

The segment at 55-82 (IAICPYDSNHRMPKSSLTKHMESCRLRK) adopts a CHHC U11-48K-type zinc-finger fold. Zn(2+) contacts are provided by Cys-58, His-64, His-74, and Cys-78. Residues Lys-87 and Lys-104 each participate in a glycyl lysine isopeptide (Lys-Gly) (interchain with G-Cter in SUMO2) cross-link. Basic and acidic residues predominate over residues 255-276 (HWQEEQGRAGDAAEKNEERRSA). The tract at residues 255–337 (HWQEEQGRAG…HSHKRRKQKI (83 aa)) is disordered. A compositionally biased stretch (basic residues) spans 294-310 (RHRRARSRSPHKRKRNK). Basic and acidic residues predominate over residues 311 to 326 (DKSSESRRRKERDGER). Residues 327-337 (HHSHKRRKQKI) show a composition bias toward basic residues.

In terms of assembly, component of the U11/U12 snRNPs that are part of the U12-type spliceosome. Not found in the major spliceosome.

The protein resides in the nucleus. Likely involved in U12-type 5' splice site recognition. This Mus musculus (Mouse) protein is U11/U12 small nuclear ribonucleoprotein 48 kDa protein (Snrnp48).